Consider the following 778-residue polypeptide: Aconitate hydratase, mitochondrial (778 aa).

Residues 1 to 16 constitute a mitochondrion transit peptide; it reads MLSARSAIKRPIVRGL. Residues Q95 and 188-190 each bind substrate; that span reads DSH. C382 is a [4Fe-4S] cluster binding site. Position 391 is a phosphoserine (S391). At T409 the chain carries Phosphothreonine. [4Fe-4S] cluster contacts are provided by C445 and C448. Positions 471 and 476 each coordinate substrate. A Phosphoserine modification is found at S556. Residues R604 and 667–668 contribute to the substrate site; that span reads SR.

It belongs to the aconitase/IPM isomerase family. In terms of assembly, monomer. Binds to mitochondrial DNA (mtDNA) and identified as component of mitochondrial nucleoids. [4Fe-4S] cluster serves as cofactor.

The protein localises to the mitochondrion. The protein resides in the cytoplasm. It carries out the reaction citrate = D-threo-isocitrate. The protein operates within carbohydrate metabolism; tricarboxylic acid cycle; isocitrate from oxaloacetate: step 2/2. Its activity is regulated as follows. Subject to catabolite regulation. In terms of biological role, catalyzes the isomerization of citrate to isocitrate via cis-aconitate, a step in the citric acid cycle. Can also provide minor contributions to the reversible dehydration of (R)-homocitrate to cis-homoaconitate, a step in the alpha-aminoadipate pathway for lysine biosynthesis. Also plays an essential role in mtDNA maintenance. May directly protect mtDNA from accumulation of point mutations and ssDNA breaks as a component of mitochondrial nucleoids, or by preventing accumulation of iron citrate thereby alleviating its detrimental effects in mitochondria. In Saccharomyces cerevisiae (strain ATCC 204508 / S288c) (Baker's yeast), this protein is Aconitate hydratase, mitochondrial.